Reading from the N-terminus, the 735-residue chain is Photosystem I P700 chlorophyll a apoprotein A2 (735 aa).

The next 8 membrane-spanning stretches (helical) occupy residues 46 to 69 (IFAS…FHVA), 135 to 158 (LYTG…LHLQ), 175 to 199 (LNHH…HVAI), 274 to 292 (IAHH…GHMY), 331 to 354 (IHFQ…QHMY), 370 to 396 (AALY…IFFI), 418 to 440 (AIIS…PYVH), and 518 to 536 (FLVH…LILV). Residues C560 and C569 each coordinate [4Fe-4S] cluster. The next 2 helical transmembrane spans lie at 576-597 (AFYL…YWHW) and 644-666 (LSVW…MFLI). H655, M663, and Y671 together coordinate chlorophyll a. Residue W672 participates in phylloquinone binding. A helical transmembrane segment spans residues 708–728 (LVGLAHFSVGYIFTYAAFLIA).

Belongs to the PsaA/PsaB family. In terms of assembly, the PsaA/B heterodimer binds the P700 chlorophyll special pair and subsequent electron acceptors. PSI consists of a core antenna complex that captures photons, and an electron transfer chain that converts photonic excitation into a charge separation. The eukaryotic PSI reaction center is composed of at least 11 subunits. It depends on P700 is a chlorophyll a/chlorophyll a' dimer, A0 is one or more chlorophyll a, A1 is one or both phylloquinones and FX is a shared 4Fe-4S iron-sulfur center. as a cofactor.

The protein resides in the plastid. Its subcellular location is the chloroplast thylakoid membrane. It catalyses the reaction reduced [plastocyanin] + hnu + oxidized [2Fe-2S]-[ferredoxin] = oxidized [plastocyanin] + reduced [2Fe-2S]-[ferredoxin]. In terms of biological role, psaA and PsaB bind P700, the primary electron donor of photosystem I (PSI), as well as the electron acceptors A0, A1 and FX. PSI is a plastocyanin-ferredoxin oxidoreductase, converting photonic excitation into a charge separation, which transfers an electron from the donor P700 chlorophyll pair to the spectroscopically characterized acceptors A0, A1, FX, FA and FB in turn. Oxidized P700 is reduced on the lumenal side of the thylakoid membrane by plastocyanin. This is Photosystem I P700 chlorophyll a apoprotein A2 from Zea mays (Maize).